Here is a 249-residue protein sequence, read N- to C-terminus: 5'-nucleotidase SurE (249 aa).

A divalent metal cation is bound by residues Asp8, Asp9, Ser39, and Asn91.

This sequence belongs to the SurE nucleotidase family. Requires a divalent metal cation as cofactor.

The protein localises to the cytoplasm. It catalyses the reaction a ribonucleoside 5'-phosphate + H2O = a ribonucleoside + phosphate. In terms of biological role, nucleotidase that shows phosphatase activity on nucleoside 5'-monophosphates. The sequence is that of 5'-nucleotidase SurE from Pseudomonas aeruginosa (strain LESB58).